A 672-amino-acid polypeptide reads, in one-letter code: Bifunctional polymyxin resistance protein ArnA (672 aa).

Residues 1-310 (MKAIVFAYHD…EMGMVPQAKL (310 aa)) form a formyltransferase ArnAFT region. Residue H104 is the Proton donor; for formyltransferase activity of the active site. (6R)-10-formyltetrahydrofolate-binding positions include R114 and 136–140 (VSRAD). Positions 320-672 (RRTRVLILGV…HADNVTDTQG (353 aa)) are dehydrogenase ArnADH. Residues D353 and 374–375 (DI) contribute to the NAD(+) site. UDP-alpha-D-glucuronate is bound by residues A399, Y404, and 438–439 (TS). The active-site Proton acceptor; for decarboxylase activity is E440. UDP-alpha-D-glucuronate is bound by residues R466, N498, 532–541 (KLVDGGAQKR), and Y619. The Proton donor; for decarboxylase activity role is filled by R625.

This sequence in the N-terminal section; belongs to the Fmt family. UDP-L-Ara4N formyltransferase subfamily. In the C-terminal section; belongs to the NAD(P)-dependent epimerase/dehydratase family. UDP-glucuronic acid decarboxylase subfamily. Homohexamer, formed by a dimer of trimers.

The catalysed reaction is UDP-alpha-D-glucuronate + NAD(+) = UDP-beta-L-threo-pentopyranos-4-ulose + CO2 + NADH. It carries out the reaction UDP-4-amino-4-deoxy-beta-L-arabinose + (6R)-10-formyltetrahydrofolate = UDP-4-deoxy-4-formamido-beta-L-arabinose + (6S)-5,6,7,8-tetrahydrofolate + H(+). The protein operates within nucleotide-sugar biosynthesis; UDP-4-deoxy-4-formamido-beta-L-arabinose biosynthesis; UDP-4-deoxy-4-formamido-beta-L-arabinose from UDP-alpha-D-glucuronate: step 1/3. It functions in the pathway nucleotide-sugar biosynthesis; UDP-4-deoxy-4-formamido-beta-L-arabinose biosynthesis; UDP-4-deoxy-4-formamido-beta-L-arabinose from UDP-alpha-D-glucuronate: step 3/3. Its pathway is bacterial outer membrane biogenesis; lipopolysaccharide biosynthesis. Its function is as follows. Bifunctional enzyme that catalyzes the oxidative decarboxylation of UDP-glucuronic acid (UDP-GlcUA) to UDP-4-keto-arabinose (UDP-Ara4O) and the addition of a formyl group to UDP-4-amino-4-deoxy-L-arabinose (UDP-L-Ara4N) to form UDP-L-4-formamido-arabinose (UDP-L-Ara4FN). The modified arabinose is attached to lipid A and is required for resistance to polymyxin and cationic antimicrobial peptides. This Pectobacterium carotovorum subsp. carotovorum (strain PC1) protein is Bifunctional polymyxin resistance protein ArnA.